A 273-amino-acid chain; its full sequence is Proteasome subunit alpha (273 aa).

The segment at Asp-231–Ser-273 is disordered. The segment covering Pro-238 to Ala-249 has biased composition (low complexity).

Belongs to the peptidase T1A family. The 20S proteasome core is composed of 14 alpha and 14 beta subunits that assemble into four stacked heptameric rings, resulting in a barrel-shaped structure. The two inner rings, each composed of seven catalytic beta subunits, are sandwiched by two outer rings, each composed of seven alpha subunits. The catalytic chamber with the active sites is on the inside of the barrel. Has a gated structure, the ends of the cylinder being occluded by the N-termini of the alpha-subunits. Is capped by the proteasome-associated ATPase, ARC.

Its subcellular location is the cytoplasm. The protein operates within protein degradation; proteasomal Pup-dependent pathway. Its activity is regulated as follows. The formation of the proteasomal ATPase ARC-20S proteasome complex, likely via the docking of the C-termini of ARC into the intersubunit pockets in the alpha-rings, may trigger opening of the gate for substrate entry. Interconversion between the open-gate and close-gate conformations leads to a dynamic regulation of the 20S proteasome proteolysis activity. In terms of biological role, component of the proteasome core, a large protease complex with broad specificity involved in protein degradation. The sequence is that of Proteasome subunit alpha from Salinispora arenicola (strain CNS-205).